Reading from the N-terminus, the 456-residue chain is High mobility group B protein 6 (456 aa).

Disordered stretches follow at residues 1–42 (MATN…KSAK), 117–142 (SSLT…KRPS), 238–258 (AEQD…PKHP), and 349–389 (MLKK…YFLF). Residues 11 to 21 (KKPRNSRKALK) show a composition bias toward basic residues. Positions 138-206 (TKRPSSSYVL…AYLQVIAKEK (69 aa)) form a DNA-binding region, HMG box 1. Positions 240 to 254 (QDNKKKNKKEKDPLK) are enriched in basic and acidic residues. Positions 255–321 (PKHPVSAFLV…TYLQAMEEYK (67 aa)) form a DNA-binding region, HMG box 2. A compositionally biased stretch (basic and acidic residues) spans 354–363 (EKTDNLIKKE). Positions 379-447 (PKKPASSYFL…AYKKEVEAYN (69 aa)) form a DNA-binding region, HMG box 3.

The protein resides in the nucleus. The polypeptide is High mobility group B protein 6 (HMGB6) (Arabidopsis thaliana (Mouse-ear cress)).